A 214-amino-acid polypeptide reads, in one-letter code: Orotidine 5'-phosphate decarboxylase (214 aa).

Residues Asp-11, Lys-33, 59-68 (DFKIADIPNT), Ser-114, 164-174 (PGIGSQGGRAS), Gly-187, and Arg-188 contribute to the substrate site. Lys-61 serves as the catalytic Proton donor.

Belongs to the OMP decarboxylase family. Type 1 subfamily. As to quaternary structure, homodimer.

It carries out the reaction orotidine 5'-phosphate + H(+) = UMP + CO2. It functions in the pathway pyrimidine metabolism; UMP biosynthesis via de novo pathway; UMP from orotate: step 2/2. Functionally, catalyzes the decarboxylation of orotidine 5'-monophosphate (OMP) to uridine 5'-monophosphate (UMP). The chain is Orotidine 5'-phosphate decarboxylase from Thermoplasma acidophilum (strain ATCC 25905 / DSM 1728 / JCM 9062 / NBRC 15155 / AMRC-C165).